The primary structure comprises 195 residues: Holliday junction branch migration complex subunit RuvA (195 aa).

The interval Met-1–Gln-61 is domain I. Residues Asp-62–Glu-140 are domain II. The tract at residues Asn-141–Ser-146 is flexible linker. The interval Ser-146–Lys-195 is domain III.

Belongs to the RuvA family. Homotetramer. Forms an RuvA(8)-RuvB(12)-Holliday junction (HJ) complex. HJ DNA is sandwiched between 2 RuvA tetramers; dsDNA enters through RuvA and exits via RuvB. An RuvB hexamer assembles on each DNA strand where it exits the tetramer. Each RuvB hexamer is contacted by two RuvA subunits (via domain III) on 2 adjacent RuvB subunits; this complex drives branch migration. In the full resolvosome a probable DNA-RuvA(4)-RuvB(12)-RuvC(2) complex forms which resolves the HJ.

The protein resides in the cytoplasm. The RuvA-RuvB-RuvC complex processes Holliday junction (HJ) DNA during genetic recombination and DNA repair, while the RuvA-RuvB complex plays an important role in the rescue of blocked DNA replication forks via replication fork reversal (RFR). RuvA specifically binds to HJ cruciform DNA, conferring on it an open structure. The RuvB hexamer acts as an ATP-dependent pump, pulling dsDNA into and through the RuvAB complex. HJ branch migration allows RuvC to scan DNA until it finds its consensus sequence, where it cleaves and resolves the cruciform DNA. The chain is Holliday junction branch migration complex subunit RuvA from Lactobacillus acidophilus (strain ATCC 700396 / NCK56 / N2 / NCFM).